The chain runs to 558 residues: Urease subunit alpha 2 (558 aa).

The Urease domain occupies 129–558; sequence GAVDTHVHLL…SVSLNRLYFL (430 aa). Positions 134, 136, and 214 each coordinate Ni(2+). Lys214 is subject to N6-carboxylysine. His216 serves as a coordination point for substrate. His243 and His269 together coordinate Ni(2+). His317 acts as the Proton donor in catalysis. Residue Asp357 participates in Ni(2+) binding.

The protein belongs to the metallo-dependent hydrolases superfamily. Urease alpha subunit family. May form a heterohexamer of 3 UreC (alpha) and 3 UreAB (gamma/beta) subunits. May also form a heterotrimer of UreA (gamma), UreB (beta) and UreC (alpha) subunits. Three heterotrimers associate to form the active enzyme. Requires Ni cation as cofactor. In terms of processing, carboxylation allows a single lysine to coordinate two nickel ions.

The protein resides in the cytoplasm. The enzyme catalyses urea + 2 H2O + H(+) = hydrogencarbonate + 2 NH4(+). It functions in the pathway nitrogen metabolism; urea degradation; CO(2) and NH(3) from urea (urease route): step 1/1. The sequence is that of Urease subunit alpha 2 from Streptomyces coelicolor (strain ATCC BAA-471 / A3(2) / M145).